The sequence spans 150 residues: MAKKIIGSLKLQVKAGQANPSPPVGPALGQRGLNIMAFVKEFNAKTADLEPGTPTPVIITYYQDKSFSLELKTPPASFLLKKAAGLAPVGKRNRPKGSAKPGREVAGTVAVAQIRKIAEAKMKDLNANDVEAAMQIILGSAKSCGIEVKG.

The protein belongs to the universal ribosomal protein uL11 family. As to quaternary structure, part of the ribosomal stalk of the 50S ribosomal subunit. Interacts with L10 and the large rRNA to form the base of the stalk. L10 forms an elongated spine to which L12 dimers bind in a sequential fashion forming a multimeric L10(L12)X complex. In terms of processing, one or more lysine residues are methylated.

Its function is as follows. Forms part of the ribosomal stalk which helps the ribosome interact with GTP-bound translation factors. The sequence is that of Large ribosomal subunit protein uL11 from Cereibacter sphaeroides (strain ATCC 17025 / ATH 2.4.3) (Rhodobacter sphaeroides).